Here is a 403-residue protein sequence, read N- to C-terminus: Imidazolonepropionase (403 aa).

Fe(3+) is bound by residues His69 and His71. The Zn(2+) site is built by His69 and His71. 3 residues coordinate 4-imidazolone-5-propanoate: Arg78, Tyr141, and His174. Position 141 (Tyr141) interacts with N-formimidoyl-L-glutamate. Position 239 (His239) interacts with Fe(3+). His239 is a Zn(2+) binding site. Gln242 lines the 4-imidazolone-5-propanoate pocket. Residue Asp314 coordinates Fe(3+). Residue Asp314 participates in Zn(2+) binding. The N-formimidoyl-L-glutamate site is built by Asn316 and Gly318. Ser319 lines the 4-imidazolone-5-propanoate pocket.

It belongs to the metallo-dependent hydrolases superfamily. HutI family. Requires Zn(2+) as cofactor. Fe(3+) serves as cofactor.

It localises to the cytoplasm. The enzyme catalyses 4-imidazolone-5-propanoate + H2O = N-formimidoyl-L-glutamate. Its pathway is amino-acid degradation; L-histidine degradation into L-glutamate; N-formimidoyl-L-glutamate from L-histidine: step 3/3. In terms of biological role, catalyzes the hydrolytic cleavage of the carbon-nitrogen bond in imidazolone-5-propanoate to yield N-formimidoyl-L-glutamate. It is the third step in the universal histidine degradation pathway. This Legionella pneumophila (strain Corby) protein is Imidazolonepropionase.